Reading from the N-terminus, the 752-residue chain is Myotubularin-related protein 10 (752 aa).

Residues 206–636 form the Myotubularin phosphatase domain; it reads FDCSSDWDRE…SHLSVWKLYF (431 aa). Residues 652 to 683 are a coiled coil; the sequence is TAFHKLSVLTDEIEMLQNQLRQYKGAAGTANT.

The protein belongs to the protein-tyrosine phosphatase family. Non-receptor class myotubularin subfamily.

This chain is Myotubularin-related protein 10 (mtmr10), found in Danio rerio (Zebrafish).